Reading from the N-terminus, the 217-residue chain is Proteasome subunit beta type-9 (217 aa).

Positions 1–18 are cleaved as a propeptide — removed in mature form; that stretch reads MLEESSEPGWLSEEVKTG. The Nucleophile role is filled by Thr-19.

Belongs to the peptidase T1B family. As to quaternary structure, the 26S proteasome consists of a 20S proteasome core and two 19S regulatory subunits. The 20S proteasome core is composed of 28 subunits that are arranged in four stacked rings, resulting in a barrel-shaped structure. The two end rings are each formed by seven alpha subunits, and the two central rings are each formed by seven beta subunits. The catalytic chamber with the active sites is on the inside of the barrel. Component of the immunoproteasome, where it displaces the equivalent housekeeping subunit PSMB6. Post-translationally, autocleaved. The resulting N-terminal Thr residue of the mature subunit is responsible for the nucleophile proteolytic activity.

It localises to the cytoplasm. The protein resides in the nucleus. The catalysed reaction is Cleavage of peptide bonds with very broad specificity.. The proteasome is a multicatalytic proteinase complex which is characterized by its ability to cleave peptides with Arg, Phe, Tyr, Leu, and Glu adjacent to the leaving group at neutral or slightly basic pH. The proteasome has an ATP-dependent proteolytic activity. This subunit is involved in antigen processing to generate class I binding peptides. This Salmo salar (Atlantic salmon) protein is Proteasome subunit beta type-9 (psmb9-a).